A 527-amino-acid polypeptide reads, in one-letter code: Serine/threonine-protein kinase CHK1 (527 aa).

Residues 15 to 281 (VVLGDTVGQG…LKALKLHPWV (267 aa)) form the Protein kinase domain. Residues 21-29 (VGQGAFACV) and K45 each bind ATP. The active-site Proton acceptor is the D142.

The protein belongs to the protein kinase superfamily. CAMK Ser/Thr protein kinase family. NIM1 subfamily.

Its subcellular location is the nucleus. It catalyses the reaction L-seryl-[protein] + ATP = O-phospho-L-seryl-[protein] + ADP + H(+). The enzyme catalyses L-threonyl-[protein] + ATP = O-phospho-L-threonyl-[protein] + ADP + H(+). In terms of biological role, serine/threonine-protein kinase which is required for checkpoint-mediated cell cycle arrest and activation of DNA repair in response to the presence of DNA damage or unreplicated DNA. May also negatively regulate cell cycle progression during unperturbed cell cycles. Controls phosphorylation and abundance of PDS1 to prevent anaphase entry. Also helps prevent mitotic exit. The chain is Serine/threonine-protein kinase CHK1 (CHK1) from Saccharomyces cerevisiae (strain ATCC 204508 / S288c) (Baker's yeast).